The chain runs to 1460 residues: Collagen alpha-1(I) chain (1460 aa).

Residues 1–22 (MFSFVDLRLLLLLAATALLTHG) form the signal peptide. The propeptide at 23 to 157 (QEEGQEEDIP…PPGLGGNFAP (135 aa)) is N-terminal propeptide. In terms of domain architecture, VWFC spans 34-92 (VTCVQNGLRYYDRDVWKPEACRICVCDNGNVLCDDVICDETKNCPGAQVPPGECCPVCP). Positions 96-1213 (ASPTDQETTG…KAHDGGRYYR (1118 aa)) are disordered. A compositionally biased stretch (pro residues) spans 134–149 (PGLPGPPGPPGPPGPP). The segment at 158–174 (QMSYGYDEKSTGGISVP) is nonhelical region (N-terminal). At Lys-166 the chain carries Allysine. A Phosphoserine modification is found at Ser-167. Residues 175–1188 (GPMGPSGPRG…PGPPGPPGPP (1014 aa)) are triple-helical region. 4-hydroxyproline occurs at positions 186, 189, 192, 201, 204, 207, 222, 237, 243, 252, and 258. Residues 194 to 213 (PQGFQGPPGEPGEPGASGPM) show a composition bias toward low complexity. Residues 225 to 239 (NGDDGEAGKPGRPGE) are compositionally biased toward basic and acidic residues. Lys-261 is subject to 5-hydroxylysine; alternate. O-linked (Gal...) hydroxylysine; alternate glycosylation is present at Lys-261. A Phosphoserine modification is found at Ser-267. A compositionally biased stretch (low complexity) spans 275 to 291 (DAGPAGPKGEPGSPGEN). 4-hydroxyproline is present on residues Pro-285, Pro-288, Pro-294, Pro-303, and Pro-309. Over residues 314-327 (PAGARGNDGATGAA) the composition is skewed to low complexity. Over residues 329–341 (PPGPTGPAGPPGF) the composition is skewed to pro residues. 11 positions are modified to 4-hydroxyproline: Pro-330, Pro-339, Pro-342, Pro-369, Pro-372, Pro-384, Pro-390, Pro-399, Pro-405, Pro-408, and Pro-423. Residues 375-414 (AGAAGPAGNPGADGQPGAKGANGAPGIAGAPGFPGARGPS) are compositionally biased toward low complexity. At Lys-426 the chain carries 5-hydroxylysine. 4-hydroxyproline occurs at positions 432, 435, 447, 456, 471, 477, 486, and 492. Residues 481–490 (GERGGPGSRG) show a composition bias toward gly residues. Lys-501 is subject to 5-hydroxylysine. 28 positions are modified to 4-hydroxyproline: Pro-510, Pro-519, Pro-525, Pro-531, Pro-540, Pro-543, Pro-552, Pro-561, Pro-567, Pro-579, Pro-588, Pro-597, Pro-600, Pro-618, Pro-636, Pro-642, Pro-648, Pro-654, Pro-660, Pro-666, Pro-678, Pro-687, Pro-699, Pro-711, Pro-714, Pro-720, Pro-726, and Pro-735. A compositionally biased stretch (low complexity) spans 534–560 (KGLTGSPGSPGPDGKTGPPGPAGQDGR). The span at 569-588 (ARGQAGVMGFPGPKGAAGEP) shows a compositional bias: low complexity. Over residues 630-657 (QGPAGSPGFQGLPGPAGPPGEAGKPGEQ) the composition is skewed to low complexity. A compositionally biased stretch (low complexity) spans 692-720 (PRGANGAPGNDGAKGDAGAPGAPGSQGAP). The Cell attachment site signature appears at 741–743 (RGD). Residue Lys-747 is modified to 5-hydroxylysine. 4-hydroxyproline is present on residues Pro-753, Pro-768, and Pro-774. Over residues 780-794 (AGPSGPAGPTGARGA) the composition is skewed to low complexity. Phosphoserine is present on Ser-783. 4-hydroxyproline occurs at positions 795, 801, 804, 813, 819, 837, 846, and 855. Residues 807–834 (AGFAGPPGADGQPGAKGEPGDAGAKGDA) show a composition bias toward low complexity. Over residues 836–848 (PPGPAGPTGPPGP) the composition is skewed to pro residues. Position 858 is a 5-hydroxylysine (Lys-858). The segment covering 863–879 (SAGPPGATGFPGAAGRV) has biased composition (low complexity). 2 positions are modified to 4-hydroxyproline: Pro-867 and Pro-873. Position 881 is a 3-hydroxyproline (Pro-881). 4-hydroxyproline occurs at positions 882, 891, 894, 915, 924, 933, 942, 960, 969, 972, 978, 993, 999, 1005, 1014, and 1020. The segment covering 908–917 (ETGPAGRPGE) has biased composition (low complexity). Residues 927 to 951 (AGEKGSPGADGPAGAPGTPGPQGIA) are compositionally biased toward low complexity. The segment covering 992-1002 (PPGPMGPPGLA) has biased composition (pro residues). Positions 1004–1019 (PPGESGREGSPGAEGS) are enriched in low complexity. Lys-1029 bears the 5-hydroxylysine mark. Pro residues predominate over residues 1038 to 1053 (AGPPGAPGAPGAPGPV). Pro-1041, Pro-1044, and Pro-1047 each carry 4-hydroxyproline. A compositionally biased stretch (low complexity) spans 1074–1088 (IGPVGARGPAGPQGP). A Cell attachment site motif is present at residues 1089–1091 (RGD). A compositionally biased stretch (basic and acidic residues) spans 1089 to 1103 (RGDKGETGEQGDRGI). Residue Lys-1092 is modified to 5-hydroxylysine. Lys-1104 is subject to 5-hydroxylysine; alternate. Lys-1104 is a glycosylation site (O-linked (Gal...) hydroxylysine; alternate). 5 positions are modified to 4-hydroxyproline: Pro-1116, Pro-1119, Pro-1122, Pro-1140, and Pro-1155. A compositionally biased stretch (low complexity) spans 1122–1155 (PGEQGPSGASGPAGPRGPPGSAGSPGKDGLNGLP). 3-hydroxyproline is present on Pro-1160. Pro-1161 is subject to 4-hydroxyproline. Residues 1173–1188 (VGPPGPPGPPGPPGPP) show a composition bias toward pro residues. Pro-1175 carries the post-translational modification 3-hydroxyproline. 4-hydroxyproline is present on Pro-1176. Position 1178 is a 3-hydroxyproline (Pro-1178). Position 1179 is a 4-hydroxyproline (Pro-1179). Pro-1181 carries the 3-hydroxyproline modification. Residues Pro-1182, Pro-1185, and Pro-1188 each carry the 4-hydroxyproline modification. Residues 1189–1214 (SGGFDFSFLPQPPQEKAHDGGRYYRA) form a nonhelical region (C-terminal) region. The span at 1203-1213 (EKAHDGGRYYR) shows a compositional bias: basic and acidic residues. Allysine is present on Lys-1204. A propeptide spans 1215–1460 (DDANVVRDRD…GMDIGPVCFL (246 aa)) (C-terminal propeptide). The region spanning 1225–1460 (LEVDTTLKSL…GMDIGPVCFL (236 aa)) is the Fibrillar collagen NC1 domain. Disulfide bonds link Cys-1255-Cys-1287, Cys-1295-Cys-1458, and Cys-1366-Cys-1411. Residues Asp-1273, Asn-1275, Gln-1276, Cys-1278, and Asp-1281 each coordinate Ca(2+). Asn-1361 carries N-linked (GlcNAc...) asparagine glycosylation.

It belongs to the fibrillar collagen family. As to quaternary structure, trimers of one alpha 2(I) and two alpha 1(I) chains. Interacts with MRC2. Interacts with TRAM2. Interacts with MFAP4 in a Ca (2+)-dependent manner. Contains mostly 4-hydroxyproline. Proline residues at the third position of the tripeptide repeating unit (G-X-Y) are hydroxylated in some or all of the chains. Post-translationally, contains 3-hydroxyproline at a few sites. This modification occurs on the first proline residue in the sequence motif Gly-Pro-Hyp, where Hyp is 4-hydroxyproline. In terms of processing, lysine residues at the third position of the tripeptide repeating unit (G-X-Y) are 5-hydroxylated in some or all of the chains. O-glycosylated on hydroxylated lysine residues. The O-linked glycan consists of a Glc-Gal disaccharide.

Its subcellular location is the secreted. It is found in the extracellular space. The protein localises to the extracellular matrix. In terms of biological role, type I collagen is a member of group I collagen (fibrillar forming collagen). This chain is Collagen alpha-1(I) chain (COL1A1), found in Canis lupus familiaris (Dog).